A 73-amino-acid chain; its full sequence is V-type proton ATPase subunit e (73 aa).

Over Met1 to Ser3 the chain is Lumenal. A helical transmembrane segment spans residues Phe4 to Met24. The Cytoplasmic portion of the chain corresponds to Ala25–Ser35. The chain crosses the membrane as a helical span at residues Thr36 to Leu56. The Lumenal portion of the chain corresponds to His57–Glu73.

This sequence belongs to the V-ATPase e1/e2 subunit family. V-ATPase is a heteromultimeric enzyme composed of a peripheral catalytic V1 complex (components A to H) attached to an integral membrane V0 proton pore complex (components: a, c, c', c'', d, e, f and VOA1).

It localises to the vacuole membrane. In terms of biological role, subunit of the V0 complex of vacuolar(H+)-ATPase (V-ATPase), a multisubunit enzyme composed of a peripheral complex (V1) that hydrolyzes ATP and a membrane integral complex (V0) that translocates protons. V-ATPase is responsible for acidifying and maintaining the pH of intracellular compartments. The polypeptide is V-type proton ATPase subunit e (VMA9) (Saccharomyces cerevisiae (strain ATCC 204508 / S288c) (Baker's yeast)).